Reading from the N-terminus, the 278-residue chain is Adenylate kinase (278 aa).

50–55 (GAGKGT) is an ATP binding site. An NMP region spans residues 70–99 (ATGDMLRAQVAKGTALGKQAKKIMNEGGLV). AMP-binding positions include Thr71, Arg76, 97 to 99 (GLV), 126 to 129 (GFPR), and Gln133. Residues 167–204 (GRLVHPASGRSYHRIFNPPKDDMKDDITGEPLVQRSDD) are LID. ATP is bound by residues Arg168 and 177–178 (SY). AMP-binding residues include Arg201 and Arg212. Gln240 contributes to the ATP binding site.

This sequence belongs to the adenylate kinase family. AK2 subfamily. In terms of assembly, monomer.

Its subcellular location is the cytoplasm. The protein resides in the cytosol. It localises to the mitochondrion intermembrane space. The catalysed reaction is AMP + ATP = 2 ADP. In terms of biological role, catalyzes the reversible transfer of the terminal phosphate group between ATP and AMP. Plays an important role in cellular energy homeostasis and in adenine nucleotide metabolism. Adenylate kinase activity is critical for regulation of the phosphate utilization and the AMP de novo biosynthesis pathways. In Neurospora crassa (strain ATCC 24698 / 74-OR23-1A / CBS 708.71 / DSM 1257 / FGSC 987), this protein is Adenylate kinase (adk-1).